A 193-amino-acid polypeptide reads, in one-letter code: dCTP deaminase (193 aa).

Residues 110–115 (RSSLAR), D128, 136–138 (VLE), Y171, K178, and Q182 contribute to the dCTP site. E138 acts as the Proton donor/acceptor in catalysis. Residues 169-193 (RPYNRRQDAKYRDQQGAVASRIDKD) are disordered.

The protein belongs to the dCTP deaminase family. In terms of assembly, homotrimer.

The enzyme catalyses dCTP + H2O + H(+) = dUTP + NH4(+). The protein operates within pyrimidine metabolism; dUMP biosynthesis; dUMP from dCTP (dUTP route): step 1/2. Its function is as follows. Catalyzes the deamination of dCTP to dUTP. The polypeptide is dCTP deaminase (Cronobacter sakazakii (strain ATCC BAA-894) (Enterobacter sakazakii)).